Consider the following 213-residue polypeptide: uncharacterized protein (213 aa).

A signal peptide spans 1-19 (MKKVLLLLFVLTIGLALSA). C20 is lipidated: N-palmitoyl cysteine. Residue C20 is the site of S-diacylglycerol cysteine attachment. Residues 20–62 (CSQSSDASEKEKPKEKKSQEELEKELDKELKKGGEPKTKKDDQ) form a disordered region. Basic and acidic residues predominate over residues 26 to 62 (ASEKEKPKEKKSQEELEKELDKELKKGGEPKTKKDDQ).

Its subcellular location is the cell membrane. This is an uncharacterized protein from Bacillus subtilis (strain 168).